We begin with the raw amino-acid sequence, 742 residues long: Ectonucleotide pyrophosphatase/phosphodiesterase 1 (742 aa).

At Met-1 to Lys-113 the chain is on the cytoplasmic side. Residues Ile-114 to Asn-134 form a helical membrane-spanning segment. The Extracellular portion of the chain corresponds to Ile-135 to Thr-742. N-linked (GlcNAc...) asparagine glycans are attached at residues Asn-161 and Asn-204. Positions Pro-168 to Asp-545 are phosphodiesterase. Catalysis depends on Thr-219, which acts as the Nucleophile. N-linked (GlcNAc...) asparagine glycans are attached at residues Asn-264, Asn-296, and Asn-403. Residues Glu-640–Thr-659 are compositionally biased toward acidic residues. 2 disordered regions span residues Glu-640 to Leu-670 and Thr-686 to Thr-711. Low complexity predominate over residues Thr-691–Thr-711.

Belongs to the nucleotide pyrophosphatase/phosphodiesterase family. Post-translationally, autophosphorylated as part of the catalytic cycle of phosphodiesterase/pyrophosphatase activity. N-glycosylated.

The protein resides in the membrane. The catalysed reaction is Hydrolytically removes 5'-nucleotides successively from the 3'-hydroxy termini of 3'-hydroxy-terminated oligonucleotides.. It carries out the reaction a ribonucleoside 5'-triphosphate + H2O = a ribonucleoside 5'-phosphate + diphosphate + H(+). The enzyme catalyses a 2'-deoxyribonucleoside 5'-triphosphate + H2O = a 2'-deoxyribonucleoside 5'-phosphate + diphosphate + H(+). Its function is as follows. Mediates extracellular nucleotide derived phosphate hydrolysis along with NPP2 and PHO5. The chain is Ectonucleotide pyrophosphatase/phosphodiesterase 1 (NPP1) from Saccharomyces cerevisiae (strain ATCC 204508 / S288c) (Baker's yeast).